The following is a 380-amino-acid chain: Cytochrome b (380 aa).

4 helical membrane-spanning segments follow: residues 34 to 54 (FGSL…FLAM), 78 to 99 (WLVR…YLHI), 114 to 134 (WNIG…GYVL), and 179 to 199 (FFAF…LHLL). 2 residues coordinate heme b: His-84 and His-98. 2 residues coordinate heme b: His-183 and His-197. His-202 contacts a ubiquinone. The next 4 membrane-spanning stretches (helical) occupy residues 227–247 (YKDT…SMLS), 289–309 (LGGV…PMIH), 321–341 (MTQF…WIGG), and 348–368 (FIEI…IFMP).

The protein belongs to the cytochrome b family. In terms of assembly, the cytochrome bc1 complex contains 3 respiratory subunits (MT-CYB, CYC1 and UQCRFS1), 2 core proteins (UQCRC1 and UQCRC2) and probably 6 low-molecular weight proteins. Heme b serves as cofactor.

The protein resides in the mitochondrion inner membrane. Component of the ubiquinol-cytochrome c reductase complex (complex III or cytochrome b-c1 complex) that is part of the mitochondrial respiratory chain. The b-c1 complex mediates electron transfer from ubiquinol to cytochrome c. Contributes to the generation of a proton gradient across the mitochondrial membrane that is then used for ATP synthesis. In Ranodon sibiricus (Siberian salamander), this protein is Cytochrome b (mt-cyb).